We begin with the raw amino-acid sequence, 145 residues long: Regulator of sigma D (145 aa).

Belongs to the Rsd/AlgQ family. In terms of assembly, interacts with RpoD.

The protein resides in the cytoplasm. Binds RpoD and negatively regulates RpoD-mediated transcription activation by preventing the interaction between the primary sigma factor RpoD with the catalytic core of the RNA polymerase and with promoter DNA. May be involved in replacement of the RNA polymerase sigma subunit from RpoD to RpoS during the transition from exponential growth to the stationary phase. This chain is Regulator of sigma D, found in Sodalis glossinidius (strain morsitans).